Here is a 157-residue protein sequence, read N- to C-terminus: MFEVLMYLFENYIHNDAGLFIEPNELTDELLRAGFNQAEIFKALDWLEQLAELQHSDTSPYLITDSPQTMRIFTDHECKMLDVQCRNFLMFVERIGVTNGITREMVMDRLAALDKSFIGLDDLKWVVLMVLFNIPGAEVACEQMEDLIFDQPGDLLH.

It belongs to the Smg family.

This is Protein Smg homolog from Pseudoalteromonas translucida (strain TAC 125).